Here is a 216-residue protein sequence, read N- to C-terminus: Regulator of G-protein signaling 19 (216 aa).

Residues 1–19 (MPTPHEAEKQHTGPEEADR) are compositionally biased toward basic and acidic residues. The segment at 1 to 30 (MPTPHEAEKQHTGPEEADRPPSMSSHDAAP) is disordered. Residue serine 24 is modified to Phosphoserine; by CK2. One can recognise an RGS domain in the interval 90 to 206 (SFDKLMHSPT…LTSPTYRSLL (117 aa)). Residue serine 97 is modified to Phosphoserine. At serine 151 the chain carries Phosphoserine; by MAPK1 and MAPK3. An interaction with GIPC region spans residues 207 to 216 (LQGAPQSSEA).

Interacts with GIPC PDZ domain. Interacts with GNAO1. Fatty acylated. Heavily palmitoylated in the cysteine string motif. Post-translationally, phosphorylated, mainly on serine residues.

Its subcellular location is the membrane. In terms of biological role, inhibits signal transduction by increasing the GTPase activity of G protein alpha subunits thereby driving them into their inactive GDP-bound form. Binds to G-alpha subfamily 1 members, predominantly to G(i)-alpha-3. Activity on G(z)-alpha is inhibited by phosphorylation and palmitoylation of the G-protein. The polypeptide is Regulator of G-protein signaling 19 (Rgs19) (Rattus norvegicus (Rat)).